Here is a 337-residue protein sequence, read N- to C-terminus: MSFFGFGPAAELDIALTDGESRRRVEHKTEDGKKEKYFLFYDGETVSGRVTVSLRNPGKRLEHQGLKIEFIGQIELYYDRGNHHEFVSLVKDLARPGELSQSQSFDFEFTHVEKPYESYTGQNVKLRYFLRATLSRRLNDVAKEMDIVVYTLSTYPELNSSIKMEVGIEDCLHIEFEYNKSKYHLKDVIVGKIYFLLVRIKIKHMEIDIIKRETTGTGPNVYHENDTIAKYEIMDGAPVRGESIPIRLFLAGYELTPTMRDINKKFSVRYYLNLVLIDEEERRYFKQQEIVLWRKGDIVRKSMSHQAAIASQRFEGTSHPETRPQHSGAAALEQEHE.

The interval 313-337 (RFEGTSHPETRPQHSGAAALEQEHE) is disordered.

It belongs to the VPS26 family. In terms of assembly, component of the heterotrimeric retromer cargo-selective complex (CSC) which is believed to associate with variable sorting nexins to form functionally distinct retromer complex variants.

It localises to the cytoplasm. The protein localises to the membrane. The protein resides in the endosome. Acts as a component of the retromer cargo-selective complex (CSC). The CSC is believed to be the core functional component of retromer or respective retromer complex variants acting to prevent missorting of selected transmembrane cargo proteins into the lysosomal degradation pathway. Retromer mediates retrograde transport of cargo proteins from endosomes to the trans-Golgi network (TGN). The chain is Vacuolar protein sorting-associated protein 26B-B (vps26b-b) from Xenopus laevis (African clawed frog).